Here is a 492-residue protein sequence, read N- to C-terminus: Octanoyltransferase (492 aa).

Positions 1–255 (MRCILLGSGT…GYDGLEAIID (255 aa)) are unknown. The lipB domain stretch occupies residues 256 to 492 (EKGIRIKDFE…AVFRRNFGAL (237 aa)). The 188-residue stretch at 305–492 (RKPQNTLLFC…AVFRRNFGAL (188 aa)) folds into the BPL/LPL catalytic domain. Residues 350–357 (RGGDITYH), 423–425 (AIG), and 436–438 (GFA) each bind substrate. The active-site Acyl-thioester intermediate is the C454.

The protein in the C-terminal section; belongs to the LipB family.

The protein localises to the cytoplasm. It catalyses the reaction octanoyl-[ACP] + L-lysyl-[protein] = N(6)-octanoyl-L-lysyl-[protein] + holo-[ACP] + H(+). It functions in the pathway protein modification; protein lipoylation via endogenous pathway; protein N(6)-(lipoyl)lysine from octanoyl-[acyl-carrier-protein]: step 1/2. Its function is as follows. Catalyzes the transfer of endogenously produced octanoic acid from octanoyl-acyl-carrier-protein onto the lipoyl domains of lipoate-dependent enzymes. Lipoyl-ACP can also act as a substrate although octanoyl-ACP is likely to be the physiological substrate. The protein is Octanoyltransferase of Porphyromonas gingivalis (strain ATCC BAA-308 / W83).